The following is a 213-amino-acid chain: MYISFILFSIIFIFLGVIENFIINKRVLYKPNFLLYSEKKNKKKSTPEQVTTRVNKDLKEKKRKRPRSKILECLLKEKVEKVEKVEKNSDENQCSNVDKEIREGKRVPRLRVRNTNNHIYASIIDDYKKYVLCSTCSRDATLSKILGTYRRKATNRVINNGRTIKSAWEIGKIIGKKALSKGIFKVRFDRARHPYAGKVEALAEGARAVGLLL.

The protein belongs to the universal ribosomal protein uL18 family.

The protein localises to the plastid. It localises to the apicoplast. In Plasmodium falciparum (isolate 3D7), this protein is Large ribosomal subunit protein uL18c (RPL18).